A 156-amino-acid chain; its full sequence is Ribosome maturation factor RimP (156 aa).

Belongs to the RimP family.

Its subcellular location is the cytoplasm. Its function is as follows. Required for maturation of 30S ribosomal subunits. This chain is Ribosome maturation factor RimP, found in Bacillus subtilis (strain 168).